Here is a 305-residue protein sequence, read N- to C-terminus: ADP,ATP carrier protein (305 aa).

Solcar repeat units lie at residues 8–101, 112–204, and 212–298; these read SNFA…IKAM, KWFA…LKPL, and NSFL…LQVI. 5 helical membrane passes run 10–37, 78–102, 110–130, 180–201, and 215–235; these read FAIDFLMGGVSAAVSKTAAAPIERVKLL, TANVIRYFPTQALNFAFKDKIKAMF, YAKWFAGNLASGGLAGGLSLL, FLPSVVGIVVYRGLYFGLYDSL, and LASFLLGWAVTTGASTASYPL. The ADP site is built by arginine 83 and lysine 95. Residue arginine 239 participates in ADP binding. Positions 239–244 are important for transport activity; the sequence is RRRMMM. A Nucleotide carrier signature motif motif is present at residues 239–244; sequence RRRMMM. The helical transmembrane segment at 275-295 threads the bilayer; the sequence is CGANILRGVAGAGVISMYDQL.

This sequence belongs to the mitochondrial carrier (TC 2.A.29) family. In terms of assembly, monomer.

It localises to the mitochondrion inner membrane. It carries out the reaction ADP(in) + ATP(out) = ADP(out) + ATP(in). With respect to regulation, the matrix-open state (m-state) is inhibited by the membrane-permeable bongkrekic acid (BKA). The cytoplasmic-open state (c-state) is inhibited by the membrane-impermeable toxic inhibitor carboxyatractyloside (CATR). Its function is as follows. ADP:ATP antiporter that mediates import of ADP into the mitochondrial matrix for ATP synthesis, and export of ATP out to fuel the cell. Cycles between the cytoplasmic-open state (c-state) and the matrix-open state (m-state): operates by the alternating access mechanism with a single substrate-binding site intermittently exposed to either the cytosolic (c-state) or matrix (m-state) side of the inner mitochondrial membrane. The sequence is that of ADP,ATP carrier protein (AAC) from Kluyveromyces lactis (strain ATCC 8585 / CBS 2359 / DSM 70799 / NBRC 1267 / NRRL Y-1140 / WM37) (Yeast).